Here is a 90-residue protein sequence, read N- to C-terminus: Small ribosomal subunit protein uS15c (90 aa).

This sequence belongs to the universal ribosomal protein uS15 family. Part of the 30S ribosomal subunit.

The protein localises to the plastid. It localises to the chloroplast. The chain is Small ribosomal subunit protein uS15c (rps15) from Gossypium barbadense (Sea Island cotton).